The chain runs to 444 residues: Tubulin beta-8 chain (444 aa).

The short motif at 1 to 4 (MREI) is the MREI motif element. GTP is bound by residues Gln-11, Glu-69, Ser-138, Gly-142, Thr-143, and Gly-144. Residue Glu-69 coordinates Mg(2+). Ser-172 is subject to Phosphoserine; by CDK1. The GTP site is built by Asn-204 and Asn-226. Glu-436 is subject to 5-glutamyl polyglutamate.

The protein belongs to the tubulin family. As to quaternary structure, dimer of alpha and beta chains. A typical microtubule is a hollow water-filled tube with an outer diameter of 25 nm and an inner diameter of 15 nM. Alpha-beta heterodimers associate head-to-tail to form protofilaments running lengthwise along the microtubule wall with the beta-tubulin subunit facing the microtubule plus end conferring a structural polarity. Microtubules usually have 13 protofilaments but different protofilament numbers can be found in some organisms and specialized cells. Requires Mg(2+) as cofactor. Post-translationally, some glutamate residues at the C-terminus are polyglycylated, resulting in polyglycine chains on the gamma-carboxyl group. Glycylation is mainly limited to tubulin incorporated into axonemes (cilia and flagella) whereas glutamylation is prevalent in neuronal cells, centrioles, axonemes, and the mitotic spindle. Both modifications can coexist on the same protein on adjacent residues, and lowering polyglycylation levels increases polyglutamylation, and reciprocally. Cilia and flagella glycylation is required for their stability and maintenance. Flagella glycylation controls sperm motility. Some glutamate residues at the C-terminus are polyglutamylated, resulting in polyglutamate chains on the gamma-carboxyl group. Polyglutamylation plays a key role in microtubule severing by spastin (SPAST). SPAST preferentially recognizes and acts on microtubules decorated with short polyglutamate tails: severing activity by SPAST increases as the number of glutamates per tubulin rises from one to eight, but decreases beyond this glutamylation threshold. Glutamylation is also involved in cilia motility. In terms of processing, phosphorylated on Ser-172 by CDK1 during the cell cycle, from metaphase to telophase, but not in interphase. This phosphorylation inhibits tubulin incorporation into microtubules.

The protein resides in the cytoplasm. It is found in the cytoskeleton. It localises to the spindle. In terms of biological role, tubulin is the major constituent of microtubules, a cylinder consisting of laterally associated linear protofilaments composed of alpha- and beta-tubulin heterodimers. Microtubules grow by the addition of GTP-tubulin dimers to the microtubule end, where a stabilizing cap forms. Below the cap, tubulin dimers are in GDP-bound state, owing to GTPase activity of alpha-tubulin. Has a key role in meiotic spindle assembly and oocyte maturation. This chain is Tubulin beta-8 chain (TUBB8), found in Papio hamadryas (Hamadryas baboon).